The sequence spans 480 residues: Siroheme synthase (480 aa).

A precorrin-2 dehydrogenase /sirohydrochlorin ferrochelatase region spans residues 1–203; the sequence is MNYFPIFANL…QQTAQAEQEL (203 aa). NAD(+) is bound by residues 22–23 and 43–44; these read SV and NQ. A Phosphoserine modification is found at Ser128. The interval 214–480 is uroporphyrinogen-III C-methyltransferase; sequence GFVSLVGAGP…GGLNAGQRAA (267 aa). Position 223 (Pro223) interacts with S-adenosyl-L-methionine. Asp246 acts as the Proton acceptor in catalysis. The active-site Proton donor is the Lys268. Residues 299–301, Val304, 329–330, Met381, and Gly410 each bind S-adenosyl-L-methionine; these read GGD and TA.

The protein in the N-terminal section; belongs to the precorrin-2 dehydrogenase / sirohydrochlorin ferrochelatase family. It in the C-terminal section; belongs to the precorrin methyltransferase family.

The catalysed reaction is uroporphyrinogen III + 2 S-adenosyl-L-methionine = precorrin-2 + 2 S-adenosyl-L-homocysteine + H(+). It catalyses the reaction precorrin-2 + NAD(+) = sirohydrochlorin + NADH + 2 H(+). It carries out the reaction siroheme + 2 H(+) = sirohydrochlorin + Fe(2+). Its pathway is cofactor biosynthesis; adenosylcobalamin biosynthesis; precorrin-2 from uroporphyrinogen III: step 1/1. The protein operates within cofactor biosynthesis; adenosylcobalamin biosynthesis; sirohydrochlorin from precorrin-2: step 1/1. It functions in the pathway porphyrin-containing compound metabolism; siroheme biosynthesis; precorrin-2 from uroporphyrinogen III: step 1/1. It participates in porphyrin-containing compound metabolism; siroheme biosynthesis; siroheme from sirohydrochlorin: step 1/1. Its pathway is porphyrin-containing compound metabolism; siroheme biosynthesis; sirohydrochlorin from precorrin-2: step 1/1. Its function is as follows. Multifunctional enzyme that catalyzes the SAM-dependent methylations of uroporphyrinogen III at position C-2 and C-7 to form precorrin-2 via precorrin-1. Then it catalyzes the NAD-dependent ring dehydrogenation of precorrin-2 to yield sirohydrochlorin. Finally, it catalyzes the ferrochelation of sirohydrochlorin to yield siroheme. In Neisseria meningitidis serogroup C (strain 053442), this protein is Siroheme synthase.